A 179-amino-acid polypeptide reads, in one-letter code: UPF0302 protein BPUM_1989 (179 aa).

This sequence belongs to the UPF0302 family.

The polypeptide is UPF0302 protein BPUM_1989 (Bacillus pumilus (strain SAFR-032)).